The following is a 410-amino-acid chain: Peptidase T (410 aa).

Histidine 78 is a Zn(2+) binding site. Aspartate 80 is a catalytic residue. Zn(2+) is bound at residue aspartate 140. Catalysis depends on glutamate 174, which acts as the Proton acceptor. The Zn(2+) site is built by glutamate 175, aspartate 197, and histidine 379.

Belongs to the peptidase M20B family. Zn(2+) serves as cofactor.

The protein localises to the cytoplasm. The catalysed reaction is Release of the N-terminal residue from a tripeptide.. In terms of biological role, cleaves the N-terminal amino acid of tripeptides. The chain is Peptidase T from Staphylococcus saprophyticus subsp. saprophyticus (strain ATCC 15305 / DSM 20229 / NCIMB 8711 / NCTC 7292 / S-41).